Consider the following 594-residue polypeptide: Kelch domain-containing protein 7B (594 aa).

Residues 1 to 174 form a disordered region; it reads MVLRSHPFPR…PAGRSGALTE (174 aa). Over residues 49 to 58 the composition is skewed to gly residues; that stretch reads IGTGTGGLVE. Over residues 64–74 the composition is skewed to polar residues; that stretch reads QPRSSETNGSP. The segment covering 104–115 has biased composition (pro residues); the sequence is PAQPPAQRPPGP. Over residues 116–126 the composition is skewed to low complexity; the sequence is AASSSARRSQP. Kelch repeat units lie at residues 306-354, 355-405, 406-448, 451-493, and 495-538; these read EEPP…TMHN, YLFL…ALDG, LLYA…AVAC, DIYV…ALGG, and LYRF…TTLG.

The sequence is that of Kelch domain-containing protein 7B (KLHDC7B) from Homo sapiens (Human).